We begin with the raw amino-acid sequence, 321 residues long: Malate dehydrogenase (321 aa).

NAD(+) contacts are provided by residues 10 to 15 (GSGMIG) and Asp-34. Arg-83 and Arg-89 together coordinate substrate. NAD(+)-binding positions include Asn-96 and 119–121 (ITN). Substrate is bound by residues Asn-121 and Arg-152. The active-site Proton acceptor is His-176.

The protein belongs to the LDH/MDH superfamily. MDH type 3 family.

The catalysed reaction is (S)-malate + NAD(+) = oxaloacetate + NADH + H(+). In terms of biological role, catalyzes the reversible oxidation of malate to oxaloacetate. This Bartonella bacilliformis (strain ATCC 35685 / KC583 / Herrer 020/F12,63) protein is Malate dehydrogenase.